The sequence spans 413 residues: Tyrosine--tRNA ligase (413 aa).

Y34 serves as a coordination point for L-tyrosine. The 'HIGH' region signature appears at 39 to 48; sequence CTAQSLHVGN. 2 residues coordinate L-tyrosine: Y171 and Q175. Positions 231-235 match the 'KMSKS' region motif; sequence KMGKT. K234 contributes to the ATP binding site. Residues 346 to 411 enclose the S4 RNA-binding domain; the sequence is IPITELLVTI…GKKCHILVKI (66 aa).

It belongs to the class-I aminoacyl-tRNA synthetase family. TyrS type 1 subfamily. As to quaternary structure, homodimer.

It is found in the cytoplasm. It carries out the reaction tRNA(Tyr) + L-tyrosine + ATP = L-tyrosyl-tRNA(Tyr) + AMP + diphosphate + H(+). Catalyzes the attachment of tyrosine to tRNA(Tyr) in a two-step reaction: tyrosine is first activated by ATP to form Tyr-AMP and then transferred to the acceptor end of tRNA(Tyr). In Orientia tsutsugamushi (strain Boryong) (Rickettsia tsutsugamushi), this protein is Tyrosine--tRNA ligase.